The chain runs to 210 residues: Large ribosomal subunit protein uL3 (210 aa).

Residues 120 to 143 (FQGNIKKDGQSRGPMGHGSRYHRR) form a disordered region.

Belongs to the universal ribosomal protein uL3 family. As to quaternary structure, part of the 50S ribosomal subunit. Forms a cluster with proteins L14 and L19.

In terms of biological role, one of the primary rRNA binding proteins, it binds directly near the 3'-end of the 23S rRNA, where it nucleates assembly of the 50S subunit. This chain is Large ribosomal subunit protein uL3, found in Latilactobacillus sakei subsp. sakei (strain 23K) (Lactobacillus sakei subsp. sakei).